The chain runs to 270 residues: uncharacterized protein (270 aa).

This is an uncharacterized protein from Methanocaldococcus jannaschii (strain ATCC 43067 / DSM 2661 / JAL-1 / JCM 10045 / NBRC 100440) (Methanococcus jannaschii).